The sequence spans 366 residues: Chaperone protein DnaJ (366 aa).

The region spanning 5–69 (DYYEVLGVSK…QKRAQYDQFG (65 aa)) is the J domain. Residues 128-210 (GKELNVEIPV…CHGTGKVRKR (83 aa)) form a CR-type zinc finger. Positions 141, 144, 158, 161, 184, 187, 198, and 201 each coordinate Zn(2+). CXXCXGXG motif repeat units follow at residues 141–148 (CDTCHGSG), 158–165 (CKYCSGTG), 184–191 (CRHCSGTG), and 198–205 (CTTCHGTG).

It belongs to the DnaJ family. In terms of assembly, homodimer. The cofactor is Zn(2+).

It localises to the cytoplasm. Functionally, participates actively in the response to hyperosmotic and heat shock by preventing the aggregation of stress-denatured proteins and by disaggregating proteins, also in an autonomous, DnaK-independent fashion. Unfolded proteins bind initially to DnaJ; upon interaction with the DnaJ-bound protein, DnaK hydrolyzes its bound ATP, resulting in the formation of a stable complex. GrpE releases ADP from DnaK; ATP binding to DnaK triggers the release of the substrate protein, thus completing the reaction cycle. Several rounds of ATP-dependent interactions between DnaJ, DnaK and GrpE are required for fully efficient folding. Also involved, together with DnaK and GrpE, in the DNA replication of plasmids through activation of initiation proteins. The sequence is that of Chaperone protein DnaJ from Bacillus cytotoxicus (strain DSM 22905 / CIP 110041 / 391-98 / NVH 391-98).